We begin with the raw amino-acid sequence, 430 residues long: Methylthioribose kinase 1 (430 aa).

Residues D52–N56, K71, and R125–I127 contribute to the ATP site. N56 is a substrate binding site. D246 is a binding site for substrate. Residue D263–E265 participates in ATP binding. R373 contacts substrate.

Belongs to the methylthioribose kinase family. As to quaternary structure, homodimer.

The catalysed reaction is 5-(methylsulfanyl)-D-ribose + ATP = 5-(methylsulfanyl)-alpha-D-ribose 1-phosphate + ADP + H(+). It functions in the pathway amino-acid biosynthesis; L-methionine biosynthesis via salvage pathway; S-methyl-5-thio-alpha-D-ribose 1-phosphate from S-methyl-5'-thioadenosine (hydrolase route): step 2/2. Functionally, catalyzes the phosphorylation of methylthioribose into methylthioribose-1-phosphate. This Oryza sativa subsp. japonica (Rice) protein is Methylthioribose kinase 1.